Consider the following 782-residue polypeptide: E3 UFM1-protein ligase 1 homolog (782 aa).

The segment at 404-478 is disordered; sequence NVSTQELEDE…SRGGGGASKK (75 aa).

Belongs to the UFL1 family.

Its function is as follows. E3 UFM1-protein ligase that mediates ufmylation of target proteins. This Drosophila melanogaster (Fruit fly) protein is E3 UFM1-protein ligase 1 homolog.